The following is a 283-amino-acid chain: MATKLQDENTPCLAATPSEPRPTVLVFDSGVGGLSVYDEIRRLLPDLHYIYAFDNVAFPYGEKSETFIVERVVEIVTAVQQRYPLSLAVIACNTASTVSLPALREKFAFPVVGVVPAIKPAARLTANGVVGLLATRATVKRPYTHELIARFANECQIAMLGSAELVELAEAKLHGDSVSLEELRRILRPWLRMPEPPDTVVLGCTHFPLLRDELLQVLPEGTRLVDSGAAIARRTAWLLEHEAPDAKSTDANIAYCMAMTPGAEQLLPVLQRYGFETLEKLAV.

Residues 28–29 (DS) and 60–61 (YG) each bind substrate. C92 serves as the catalytic Proton donor/acceptor. Substrate is bound at residue 93-94 (NT). C204 acts as the Proton donor/acceptor in catalysis. 205-206 (TH) provides a ligand contact to substrate.

The protein belongs to the aspartate/glutamate racemases family.

It carries out the reaction L-glutamate = D-glutamate. It functions in the pathway cell wall biogenesis; peptidoglycan biosynthesis. Provides the (R)-glutamate required for cell wall biosynthesis. This Salmonella choleraesuis (strain SC-B67) protein is Glutamate racemase.